The sequence spans 279 residues: MMSPGSSHSAMISEMSGLTITQVNLSHAPYNMIAGAIGAVVLTILALVFKDYGEQHRQAYLAEQKESEIKVIEGVNVLYALAPLIPLVILVIGGTSLQQVPGLEWTKMGVPQAMLIGAIYGIIVTRISPVKITEEFFNGMGNSYANVLGIIIAASVFVAGLKSTGAVDAAISFLKESNEFVRWGATIGPFLMGLITGSGDAAAIAFNTAVTPHAVELGYTHVNLGMAAAIAGAIGRTASPIAGVTIVCAGLAMVSPVEMVKRTAPGMILAVLFLALFML.

6 consecutive transmembrane segments (helical) span residues 29–49, 77–97, 105–125, 147–167, 186–206, and 240–260; these read PYNMIAGAIGAVVLTILALVF, VLYALAPLIPLVILVIGGTSL, WTKMGVPQAMLIGAIYGIIVT, VLGIIIAASVFVAGLKSTGAV, TIGPFLMGLITGSGDAAAIAF, and PIAGVTIVCAGLAMVSPVEMV.

Belongs to the DcuC/DcuD transporter (TC 2.A.61) family.

The protein resides in the cell membrane. This is an uncharacterized protein from Haemophilus influenzae (strain ATCC 51907 / DSM 11121 / KW20 / Rd).